The chain runs to 491 residues: Glucose-6-phosphate 1-dehydrogenase (491 aa).

NADP(+) is bound by residues Arg51 and Lys150. Residues His180, Lys184, Glu218, and Asp237 each coordinate substrate. His242 (proton acceptor) is an active-site residue. Residue Lys341 coordinates substrate.

Belongs to the glucose-6-phosphate dehydrogenase family.

It catalyses the reaction D-glucose 6-phosphate + NADP(+) = 6-phospho-D-glucono-1,5-lactone + NADPH + H(+). It functions in the pathway carbohydrate degradation; pentose phosphate pathway; D-ribulose 5-phosphate from D-glucose 6-phosphate (oxidative stage): step 1/3. Catalyzes the oxidation of glucose 6-phosphate to 6-phosphogluconolactone. The polypeptide is Glucose-6-phosphate 1-dehydrogenase (Rhizobium meliloti (strain 1021) (Ensifer meliloti)).